The sequence spans 94 residues: DNA-directed RNA polymerase subunit omega (94 aa).

This sequence belongs to the RNA polymerase subunit omega family. In terms of assembly, the RNAP catalytic core consists of 2 alpha, 1 beta, 1 beta' and 1 omega subunit. When a sigma factor is associated with the core the holoenzyme is formed, which can initiate transcription.

The enzyme catalyses RNA(n) + a ribonucleoside 5'-triphosphate = RNA(n+1) + diphosphate. Its function is as follows. Promotes RNA polymerase assembly. Latches the N- and C-terminal regions of the beta' subunit thereby facilitating its interaction with the beta and alpha subunits. This chain is DNA-directed RNA polymerase subunit omega, found in Bifidobacterium animalis subsp. lactis (strain AD011).